Here is a 206-residue protein sequence, read N- to C-terminus: Large ribosomal subunit protein uL4 (206 aa).

Belongs to the universal ribosomal protein uL4 family. In terms of assembly, part of the 50S ribosomal subunit.

One of the primary rRNA binding proteins, this protein initially binds near the 5'-end of the 23S rRNA. It is important during the early stages of 50S assembly. It makes multiple contacts with different domains of the 23S rRNA in the assembled 50S subunit and ribosome. Its function is as follows. Forms part of the polypeptide exit tunnel. This chain is Large ribosomal subunit protein uL4, found in Methylorubrum populi (strain ATCC BAA-705 / NCIMB 13946 / BJ001) (Methylobacterium populi).